A 103-amino-acid polypeptide reads, in one-letter code: Small ribosomal subunit protein uS14c (103 aa).

The protein belongs to the universal ribosomal protein uS14 family. Part of the 30S ribosomal subunit.

Its subcellular location is the plastid. The protein resides in the chloroplast. Binds 16S rRNA, required for the assembly of 30S particles. The sequence is that of Small ribosomal subunit protein uS14c from Lolium perenne (Perennial ryegrass).